We begin with the raw amino-acid sequence, 447 residues long: Kynurenine 3-monooxygenase (447 aa).

Belongs to the aromatic-ring hydroxylase family. KMO subfamily. FAD serves as cofactor.

It carries out the reaction L-kynurenine + NADPH + O2 + H(+) = 3-hydroxy-L-kynurenine + NADP(+) + H2O. It participates in cofactor biosynthesis; NAD(+) biosynthesis; quinolinate from L-kynurenine: step 1/3. Functionally, catalyzes the hydroxylation of L-kynurenine (L-Kyn) to form 3-hydroxy-L-kynurenine (L-3OHKyn). Required for synthesis of quinolinic acid. This chain is Kynurenine 3-monooxygenase, found in Flavobacterium psychrophilum (strain ATCC 49511 / DSM 21280 / CIP 103535 / JIP02/86).